The following is a 602-amino-acid chain: UvrABC system protein C (602 aa).

Residues 15–100 (DQSGVYHYFD…IKQLKPKYNI (86 aa)) enclose the GIY-YIG domain. The UVR domain maps to 206-241 (SKLISRLKERMEKLAENLRFEEAGELRDRIEKIKRI).

Belongs to the UvrC family. In terms of assembly, interacts with UvrB in an incision complex.

It is found in the cytoplasm. The UvrABC repair system catalyzes the recognition and processing of DNA lesions. UvrC both incises the 5' and 3' sides of the lesion. The N-terminal half is responsible for the 3' incision and the C-terminal half is responsible for the 5' incision. In Wolinella succinogenes (strain ATCC 29543 / DSM 1740 / CCUG 13145 / JCM 31913 / LMG 7466 / NCTC 11488 / FDC 602W) (Vibrio succinogenes), this protein is UvrABC system protein C.